A 437-amino-acid chain; its full sequence is GTP-binding protein ERG (437 aa).

Positions 39–50 (QPNLDEPTSINE) are enriched in polar residues. Positions 39–65 (QPNLDEPTSINEDGSSSDSVFDSSQYP) are disordered. Positions 51–62 (DGSSSDSVFDSS) are enriched in low complexity. Phosphoserine is present on residues S111 and S112. Residues 152 to 333 (KSLNVGIIGP…LMDQAVKKPW (182 aa)) enclose the Era-type G domain. Residues 160 to 167 (GPPNAGKS) are G1. 160 to 167 (GPPNAGKS) is a binding site for GTP. The interval 186 to 190 (NTTTH) is G2. Residues 207–210 (DTPG) are G3. GTP is bound by residues 207–211 (DTPGL) and 279–282 (NKVD). The segment at 279-282 (NKVD) is G4. A G5 region spans residues 309-311 (ISG). Residues 361–437 (VHQEIPYGLE…VHLILQVKLK (77 aa)) enclose the KH type-2 domain.

It belongs to the TRAFAC class TrmE-Era-EngA-EngB-Septin-like GTPase superfamily. Era GTPase family.

In terms of biological role, has a crucial role in plant growth and development, possibly by influencing mitochondrial division. This is GTP-binding protein ERG (ERG) from Arabidopsis thaliana (Mouse-ear cress).